The primary structure comprises 535 residues: WD repeat-containing protein 25 (535 aa).

2 disordered regions span residues 1 to 108 and 141 to 160; these read MASL…PRPS and DQST…RKRG. Over residues 141 to 155 the composition is skewed to polar residues; sequence DQSTFESTAGNASSS. WD repeat units lie at residues 235–277, 281–320, 321–362, 365–411, 415–454, 460–501, and 504–535; these read GHRG…HCLQ, VHSE…QVFS, GQSD…VVKG, ATIQ…KISN, HERY…RMSR, GHKV…RACT, and GHTQ…KIWH.

This chain is WD repeat-containing protein 25 (Wdr25), found in Mus musculus (Mouse).